The following is an 89-amino-acid chain: Defensin-like protein 250 (89 aa).

The first 23 residues, Met-1–Ala-23, serve as a signal peptide directing secretion. Disulfide bonds link Cys-29–Cys-86, Cys-40–Cys-69, Cys-48–Cys-79, and Cys-67–Cys-81.

This sequence belongs to the DEFL family.

It is found in the secreted. In Arabidopsis thaliana (Mouse-ear cress), this protein is Defensin-like protein 250 (SCRL8).